The following is a 202-amino-acid chain: ATP-dependent Clp protease proteolytic subunit (202 aa).

Serine 101 functions as the Nucleophile in the catalytic mechanism. Histidine 126 is an active-site residue.

The protein belongs to the peptidase S14 family. As to quaternary structure, component of the chloroplastic Clp protease core complex.

It localises to the plastid. Its subcellular location is the chloroplast stroma. It carries out the reaction Hydrolysis of proteins to small peptides in the presence of ATP and magnesium. alpha-casein is the usual test substrate. In the absence of ATP, only oligopeptides shorter than five residues are hydrolyzed (such as succinyl-Leu-Tyr-|-NHMec, and Leu-Tyr-Leu-|-Tyr-Trp, in which cleavage of the -Tyr-|-Leu- and -Tyr-|-Trp bonds also occurs).. Functionally, cleaves peptides in various proteins in a process that requires ATP hydrolysis. Has a chymotrypsin-like activity. Plays a major role in the degradation of misfolded proteins. This chain is ATP-dependent Clp protease proteolytic subunit, found in Acorus gramineus (Dwarf sweet flag).